A 344-amino-acid chain; its full sequence is Heat-inducible transcription repressor HrcA (344 aa).

The protein belongs to the HrcA family.

Its function is as follows. Negative regulator of class I heat shock genes (grpE-dnaK-dnaJ and groELS operons). Prevents heat-shock induction of these operons. The protein is Heat-inducible transcription repressor HrcA of Anoxybacillus flavithermus (strain DSM 21510 / WK1).